The sequence spans 613 residues: Ribosome-associated molecular chaperone SSB1 (613 aa).

The nucleotide binding domain (NBD) stretch occupies residues 1–391; that stretch reads MADGVFQGAI…ILTGQSTSDE (391 aa). ATP is bound by residues 16–18, Lys-73, 205–207, 271–278, and Gly-342; these read TTY, GGT, and ERAKRTLS. Positions 392-402 are inter-domain linker; sequence TKDLLLLDVAP. The interval 403–613 is substrate binding domain (SBD); it reads LSLGVGMQGD…RVVTKAMSSR (211 aa). A lid domain (SBDalpha) region spans residues 516-612; sequence SEDIEKMVNQ…KRVVTKAMSS (97 aa). The Nuclear export signal motif lies at 574–582; it reads IEAALADAL.

Belongs to the heat shock protein 70 family. Ssb-type Hsp70 subfamily. Binds to ribosomes. Binds close to the ribosomal tunnel exit via contacts with both ribosomal proteins and rRNA. Directly interacts with nascent polypeptides. This interaction is dependent on the ribosome-associated complex (RAC). Interacts with SSE1. Interacts with FES1.

It localises to the cytoplasm. The catalysed reaction is ATP + H2O = ADP + phosphate + H(+). In terms of biological role, ribosome-bound, Hsp70-type chaperone that assists in the cotranslational folding of newly synthesized proteins in the cytosol. Stimulates folding by interacting with nascent chains, binding to short, largely hydrophobic sequences exposed by unfolded proteins, thereby stabilizing longer, more slowly translated, and aggregation-prone nascent polypeptides and domains that cannot fold stably until fully synthesized. The Hsp70-protein substrate interaction depends on ATP-binding and on allosteric regulation between the NBD and the SBD. The ATP-bound state is characterized by a fast exchange rate of substrate (low affinity state), while in the ADP-bound state exchange is much slower (high affinity state). During the Hsp70 cycle, the chaperone switches between the ATP-bound state (open conformation) and the ADP-bound state (closed conformation) by major conformational rearrangements involving mainly the lid domain. Ssb cooperates with a specific Hsp40/Hsp70 co-chaperone termed the ribosome-associated complex (RAC), which stimulates the ATPase activity of the ribosome-associated pool of Ssbs and switches it to the high affinity substrate binding state. Hsp110 chaperone SSE1 and FES1 act as nucleotide exchange factors that cause substrate release. The polypeptide is Ribosome-associated molecular chaperone SSB1 (SSB1) (Nakaseomyces delphensis (Yeast)).